We begin with the raw amino-acid sequence, 877 residues long: Ewing's tumor-associated antigen 1 homolog (877 aa).

The interval 1-82 (MQLKDGGTGM…GRSPRGKETP (82 aa)) is disordered. Over residues 56-65 (AGTRSARRAQ) the composition is skewed to basic residues. Lysine 87 is covalently cross-linked (Glycyl lysine isopeptide (Lys-Gly) (interchain with G-Cter in SUMO2)). The ATR-activation domain (AAD) signature appears at 107 to 113 (IFWDQNS). Coiled coils occupy residues 185–213 (KTKNREKELMKLAQQFDKNMEELDVIQEQ) and 306–335 (AFLNNSKTSLRKKNALLQEEIITTETLLTE). Glycyl lysine isopeptide (Lys-Gly) (interchain with G-Cter in SUMO2) cross-links involve residues lysine 416 and lysine 444. The segment at 450–479 (PSKTRNGELRNAGEHRFSSHPGDESRKVPF) is disordered. A compositionally biased stretch (basic and acidic residues) spans 454–476 (RNGELRNAGEHRFSSHPGDESRK). The residue at position 467 (serine 467) is a Phosphoserine. Lysine 510 participates in a covalent cross-link: Glycyl lysine isopeptide (Lys-Gly) (interchain with G-Cter in SUMO2). Residues 607 to 622 (GEVDDDLFCQACDDIE) carry the RBM1 motif motif. 2 disordered regions span residues 626-664 (QQENKGSEESESVSYTSTRGSRSSSTASKQASQSAPSKH) and 818-877 (ANQQ…ISLP). A compositionally biased stretch (low complexity) spans 637-662 (SVSYTSTRGSRSSSTASKQASQSAPS). Polar residues predominate over residues 818 to 833 (ANQQQSSINYSESLKP). Over residues 840-859 (ERNRKYSPEEIQRKRQEALV) the composition is skewed to basic and acidic residues. The RBM2 motif signature appears at 843–865 (RKYSPEEIQRKRQEALVRRKAKA). Over residues 868 to 877 (TVQSAPISLP) the composition is skewed to polar residues.

In terms of assembly, interacts (via RBM1 motif) with RPA1. Interacts (via RBM2 motif) with RPA2. Interacts (via the ATR-activation domain motif) with ATR. Phosphorylated by ATR.

It is found in the nucleus. In terms of biological role, replication stress response protein that accumulates at DNA damage sites and promotes replication fork progression and integrity. Recruited to stalled replication forks via interaction with the RPA complex and directly stimulates ATR kinase activity independently of TOPBP1. Probably only regulates a subset of ATR targets. This chain is Ewing's tumor-associated antigen 1 homolog, found in Mus musculus (Mouse).